The sequence spans 284 residues: MKTSDIAALEQTVEKAFENRDSVNTETRGEIREAVEAALDLLDSGGMRVAQRGEDGQWTVNQWLKKAVLLSFRLNPMQIIKGGPGDAVWWDKVSSKFDGWSSNEFEKAGFRAVPNCIVRRSAYIAPGAVLMPSFVNLGAYVGRNTMVDTWATVGSCAQIGENVHLSGGVGIGGVLEPMQAGPTIIEDNCFIGARSEVVEGCIVREGSVLGMGVFIGKSTKIVDRETGQIFYGEVPPYSVVVAGTMPGKTMANGEPGPNLYCAVIVKRVDEKTRSKTSINDLLRD.

Substrate contacts are provided by arginine 111 and aspartate 148.

Belongs to the transferase hexapeptide repeat family. Homotrimer.

It localises to the cytoplasm. The enzyme catalyses (S)-2,3,4,5-tetrahydrodipicolinate + succinyl-CoA + H2O = (S)-2-succinylamino-6-oxoheptanedioate + CoA. It participates in amino-acid biosynthesis; L-lysine biosynthesis via DAP pathway; LL-2,6-diaminopimelate from (S)-tetrahydrodipicolinate (succinylase route): step 1/3. This chain is 2,3,4,5-tetrahydropyridine-2,6-dicarboxylate N-succinyltransferase, found in Chelativorans sp. (strain BNC1).